The following is a 182-amino-acid chain: Ribosome maturation factor RimM (182 aa).

Residues 103–182 (EDEFYWRELF…RIEVDWDPGF (80 aa)) form the PRC barrel domain.

Belongs to the RimM family. In terms of assembly, binds ribosomal protein uS19.

Its subcellular location is the cytoplasm. Its function is as follows. An accessory protein needed during the final step in the assembly of 30S ribosomal subunit, possibly for assembly of the head region. Essential for efficient processing of 16S rRNA. May be needed both before and after RbfA during the maturation of 16S rRNA. It has affinity for free ribosomal 30S subunits but not for 70S ribosomes. The protein is Ribosome maturation factor RimM of Vibrio parahaemolyticus serotype O3:K6 (strain RIMD 2210633).